Reading from the N-terminus, the 1209-residue chain is Protein FAM83H (1209 aa).

The DUF1669 stretch occupies residues 1-286; it reads MARRSQSSSQ…LFAQSEPLVP (286 aa). A mediates interaction with CSNK1A1 and is required for FAM83H activity in keratin cytoskeleton organization region spans residues 1 to 286; the sequence is MARRSQSSSQ…LFAQSEPLVP (286 aa). Phosphoserine is present on residues Ser512, Ser513, Ser515, Ser522, Ser639, and Ser660. Disordered stretches follow at residues 512–545, 615–664, and 735–760; these read SSASREVRHGSDPAFGPSPRGLEPSGASRPNLGQ, RDLL…FRSR, and KGPARDPGGAGGAVTSSSHSKAVVSQ. Thr749 carries the phosphothreonine modification. A phosphoserine mark is found at Ser752, Ser778, Ser806, and Ser871. Residues 829-1056 form a disordered region; sequence AQGRSLSPQG…EERGSRVRLA (228 aa). Thr873 is subject to Phosphothreonine. 4 positions are modified to phosphoserine: Ser882, Ser893, Ser904, and Ser915. Residues 915–942 are compositionally biased toward polar residues; the sequence is SPTSGFPNRRGSPTTGLMEQKGSPTSTY. Thr917 carries the post-translational modification Phosphothreonine. Ser926 carries the post-translational modification Phosphoserine. Thr928 is modified (phosphothreonine). Ser937, Ser948, Ser959, Ser970, Ser977, Ser1035, Ser1041, and Ser1057 each carry phosphoserine. Residue Thr1072 is modified to Phosphothreonine. Disordered regions lie at residues 1076 to 1147 and 1174 to 1193; these read LEQI…EERD and EAGSSGAGDNLADEDTRDSK. Residues Ser1080, Ser1098, and Ser1177 each carry the phosphoserine modification.

The protein belongs to the FAM83 family. In terms of assembly, directly interacts (via DUF1669) with casein kinase isoforms CSNK1A1, CSNK1A1L, CSNK1D and CSNK1E. Interaction with CSNK1A1 recruits CSNK1A1 to keratin filaments. Interacts with KRT18 and probably other keratins. Expressed in tooth follicle, eye, liver and kidney.

Its subcellular location is the cytoplasm. It localises to the cytoskeleton. Functionally, may play a major role in the structural organization and calcification of developing enamel. May play a role in keratin cytoskeleton disassembly by recruiting CSNK1A1 to keratin filaments. Thereby, it may regulate epithelial cell migration. In Mus musculus (Mouse), this protein is Protein FAM83H.